A 451-amino-acid chain; its full sequence is Phosphoglucosamine mutase (451 aa).

Ser-103 (phosphoserine intermediate) is an active-site residue. The Mg(2+) site is built by Ser-103, Asp-243, Asp-245, and Asp-247. Position 103 is a phosphoserine (Ser-103).

The protein belongs to the phosphohexose mutase family. Mg(2+) is required as a cofactor. Activated by phosphorylation.

The catalysed reaction is alpha-D-glucosamine 1-phosphate = D-glucosamine 6-phosphate. Catalyzes the conversion of glucosamine-6-phosphate to glucosamine-1-phosphate. The polypeptide is Phosphoglucosamine mutase (Lactobacillus johnsonii (strain CNCM I-12250 / La1 / NCC 533)).